Consider the following 426-residue polypeptide: Phosphoribosylamine--glycine ligase (426 aa).

The ATP-grasp domain occupies 109-312 (KEVMEAAGVA…LAGVLNAVAT (204 aa)). ATP is bound at residue 138–193 (LDYFGPMYVVKDDGLAAGKGVVVTADRAEARQHIHLVHAAGNPVLLESFLDGPEVS). Residues glutamate 282 and asparagine 284 each coordinate Mg(2+).

Belongs to the GARS family. Mg(2+) serves as cofactor. The cofactor is Mn(2+).

The catalysed reaction is 5-phospho-beta-D-ribosylamine + glycine + ATP = N(1)-(5-phospho-beta-D-ribosyl)glycinamide + ADP + phosphate + H(+). It functions in the pathway purine metabolism; IMP biosynthesis via de novo pathway; N(1)-(5-phospho-D-ribosyl)glycinamide from 5-phospho-alpha-D-ribose 1-diphosphate: step 2/2. The chain is Phosphoribosylamine--glycine ligase from Corynebacterium ammoniagenes (Brevibacterium ammoniagenes).